Here is a 90-residue protein sequence, read N- to C-terminus: Small ribosomal subunit protein bS18 (90 aa).

Positions 1–23 are disordered; that stretch reads MKPMRQKNTRAQGNKSISNALAS. Residues 9-21 are compositionally biased toward polar residues; that stretch reads TRAQGNKSISNAL.

The protein belongs to the bacterial ribosomal protein bS18 family. In terms of assembly, part of the 30S ribosomal subunit. Forms a tight heterodimer with protein bS6.

Binds as a heterodimer with protein bS6 to the central domain of the 16S rRNA, where it helps stabilize the platform of the 30S subunit. This chain is Small ribosomal subunit protein bS18, found in Chlorobium luteolum (strain DSM 273 / BCRC 81028 / 2530) (Pelodictyon luteolum).